The chain runs to 218 residues: NAD(P)H-quinone oxidoreductase subunit I (218 aa).

4Fe-4S ferredoxin-type domains follow at residues 55–84 (GRIH…VDWV) and 95–124 (RNYS…MTEE). Residues Cys-64, Cys-67, Cys-70, Cys-74, Cys-104, Cys-107, Cys-110, and Cys-114 each coordinate [4Fe-4S] cluster. Residues 179–218 (LRAGKLPSQIIKELQADKSEEEGKNNSSDMVPNKLNSTNK) form a disordered region. Residues 192-202 (LQADKSEEEGK) show a composition bias toward basic and acidic residues. Over residues 203 to 218 (NNSSDMVPNKLNSTNK) the composition is skewed to polar residues.

It belongs to the complex I 23 kDa subunit family. In terms of assembly, NDH-1 is composed of at least 11 different subunits. The cofactor is [4Fe-4S] cluster.

It is found in the cellular thylakoid membrane. It carries out the reaction a plastoquinone + NADH + (n+1) H(+)(in) = a plastoquinol + NAD(+) + n H(+)(out). It catalyses the reaction a plastoquinone + NADPH + (n+1) H(+)(in) = a plastoquinol + NADP(+) + n H(+)(out). Its function is as follows. NDH-1 shuttles electrons from an unknown electron donor, via FMN and iron-sulfur (Fe-S) centers, to quinones in the respiratory and/or the photosynthetic chain. The immediate electron acceptor for the enzyme in this species is believed to be plastoquinone. Couples the redox reaction to proton translocation, and thus conserves the redox energy in a proton gradient. This is NAD(P)H-quinone oxidoreductase subunit I from Prochlorococcus marinus (strain NATL2A).